A 657-amino-acid polypeptide reads, in one-letter code: Glycogen debranching enzyme (657 aa).

Asp-336 functions as the Nucleophile in the catalytic mechanism. The active-site Proton donor is the Glu-371. Residues 460 to 479 form a disordered region; sequence ANGEENRDGTNNNYSNNHGK.

It belongs to the glycosyl hydrolase 13 family.

The enzyme catalyses Hydrolysis of (1-&gt;6)-alpha-D-glucosidic linkages to branches with degrees of polymerization of three or four glucose residues in limit dextrin.. Its pathway is glycan degradation; glycogen degradation. In terms of biological role, removes maltotriose and maltotetraose chains that are attached by 1,6-alpha-linkage to the limit dextrin main chain, generating a debranched limit dextrin. This Escherichia coli O127:H6 (strain E2348/69 / EPEC) protein is Glycogen debranching enzyme.